We begin with the raw amino-acid sequence, 493 residues long: Galactose-1-phosphate uridylyltransferase (493 aa).

It belongs to the galactose-1-phosphate uridylyltransferase type 2 family.

It localises to the cytoplasm. It catalyses the reaction alpha-D-galactose 1-phosphate + UDP-alpha-D-glucose = alpha-D-glucose 1-phosphate + UDP-alpha-D-galactose. It participates in carbohydrate metabolism; galactose metabolism. This Lactococcus lactis subsp. cremoris (strain SK11) protein is Galactose-1-phosphate uridylyltransferase.